The following is a 106-amino-acid chain: Thioredoxin (106 aa).

The region spanning 2–106 (VQVISNLDEF…LESLVQKSLA (105 aa)) is the Thioredoxin domain. Residues C30 and C33 each act as nucleophile in the active site. An intrachain disulfide couples C30 to C33.

It belongs to the thioredoxin family.

Its function is as follows. Participates in various redox reactions through the reversible oxidation of its active center dithiol to a disulfide and catalyzes dithiol-disulfide exchange reactions. In Coprinus comatus (Shaggy mane), this protein is Thioredoxin.